Reading from the N-terminus, the 694-residue chain is Inactive protein-arginine deiminase type-6 (694 aa).

Phosphoserine occurs at positions 10 and 446.

Belongs to the protein arginine deiminase family. Homodimers. Associates with alpha-tubulin. Phosphorylation at Ser-10, possibly by RSK-type kinases, and Ser-446 creates binding sites for 14-3-3 proteins. In terms of tissue distribution, highly expressed in oocytes and weakly expressed in other somatic tissues.

The protein localises to the cytoplasm. The protein resides in the cytoplasmic vesicle. Its subcellular location is the secretory vesicle. It is found in the cortical granule. It localises to the nucleus. In terms of biological role, structural constituent of cytoplasmic lattices, which plays a key role in early embryonic development. Cytoplasmic lattices consist in fibrous structures found in the cytoplasm of oocytes and preimplantation embryos. They are required to store maternal proteins critical for embryonic development, such as ribosomal proteins and proteins that control epigenetic reprogramming of the preimplantation embryo, and prevent their degradation or activation. In contrast to other members of the family, does not show protein-arginine deiminase activity due to its inability to bind Ca(2+). In Homo sapiens (Human), this protein is Inactive protein-arginine deiminase type-6.